The chain runs to 339 residues: Putative zinc metalloprotease CA_C1796 (339 aa).

His20 is a binding site for Zn(2+). Glu21 is a catalytic residue. His24 contacts Zn(2+). The next 3 membrane-spanning stretches (helical) occupy residues 91-113, 275-297, and 310-330; these read LSIVIAGPIMNLILAAVLFCIVG, QLGVMNLLPIPALDGGFVFLFLF, and VGFVNTIGFALLMILMIVVTI. A PDZ domain is found at 99–177; sequence IMNLILAAVL…GIKLALKNNG (79 aa).

It belongs to the peptidase M50B family. Requires Zn(2+) as cofactor.

It localises to the cell membrane. The protein is Putative zinc metalloprotease CA_C1796 of Clostridium acetobutylicum (strain ATCC 824 / DSM 792 / JCM 1419 / IAM 19013 / LMG 5710 / NBRC 13948 / NRRL B-527 / VKM B-1787 / 2291 / W).